The following is a 538-amino-acid chain: Mevalonate kinase erg12 (538 aa).

The disordered stretch occupies residues 1 to 87 (MGNPRGRRTN…RNMSRKPSSP (87 aa)). Polar residues predominate over residues 9 to 29 (TNGSIKTSKGTQRGTVSNLLS). The segment covering 57 to 69 (TTPSTTESTLKTT) has biased composition (low complexity). ATP is bound by residues Lys-99, Ser-231, and 236–242 (GAGLGSS). Residues Ser-242 and Glu-287 each contribute to the Mg(2+) site. Asp-298 serves as the catalytic Proton acceptor.

Belongs to the GHMP kinase family. Mevalonate kinase subfamily. As to quaternary structure, homodimer. Mg(2+) serves as cofactor.

It localises to the cytoplasm. It is found in the cytosol. The enzyme catalyses (R)-mevalonate + ATP = (R)-5-phosphomevalonate + ADP + H(+). Its pathway is isoprenoid biosynthesis; isopentenyl diphosphate biosynthesis via mevalonate pathway; isopentenyl diphosphate from (R)-mevalonate: step 1/3. In terms of biological role, mevalonate kinase; part of the second module of ergosterol biosynthesis pathway that includes the middle steps of the pathway. Erg12 converts mevalonate into 5-phosphomevalonate. The second module is carried out in the vacuole and involves the formation of farnesyl diphosphate, which is also an important intermediate in the biosynthesis of ubiquinone, dolichol, heme and prenylated proteins. Activity by the mevalonate kinase erg12 (AFUA_4G07780) first converts mevalonate into 5-phosphomevalonate. 5-phosphomevalonate is then further converted to 5-diphosphomevalonate by the phosphomevalonate kinase erg8 (AFUA_5G10680). The diphosphomevalonate decarboxylase mvd1 (AFUA_4G07130) then produces isopentenyl diphosphate. The isopentenyl-diphosphate delta-isomerase idi1 (AFUA_6G11160) then catalyzes the 1,3-allylic rearrangement of the homoallylic substrate isopentenyl (IPP) to its highly electrophilic allylic isomer, dimethylallyl diphosphate (DMAPP). Finally the farnesyl diphosphate synthase erg20 (AFUA_5G02450) catalyzes the sequential condensation of isopentenyl pyrophosphate with dimethylallyl pyrophosphate, and then with the resultant geranylpyrophosphate to the ultimate product farnesyl pyrophosphate. This is Mevalonate kinase erg12 from Aspergillus fumigatus (strain ATCC MYA-4609 / CBS 101355 / FGSC A1100 / Af293) (Neosartorya fumigata).